A 344-amino-acid chain; its full sequence is MTHLDHLLTEAIELFNRTEDLAELEQVKARYLGRHGQLTELLKGLGKIPPEERPAAGSRINQAKESLEAALSRRREAIQEKKLEEQLIEEKLDVTLSGRGTGMGGLHPITLALERIQSLFHSVGFTVASGPEIETDFYNFTALNIPESHPARAMHDTFYVDDENGGASEHLLRTHTSPVQIRYMESNPPPLKVIAPGRVYRCDSDLTHTPMFHQVEGLWIDESANFSALKGILSDFMQHFFERDDLPVRFRPSFFPFTEPSAEMDIGCVMCKTGCRVCSYTGWLEVLGCGMVHPNVFKHVNIDSQKYVGFAFGLGVERLAMLRYGVNDLRLFFENDLRFLKQFN.

Mg(2+) is bound at residue glutamate 259.

This sequence belongs to the class-II aminoacyl-tRNA synthetase family. Phe-tRNA synthetase alpha subunit type 1 subfamily. In terms of assembly, tetramer of two alpha and two beta subunits. It depends on Mg(2+) as a cofactor.

It is found in the cytoplasm. The catalysed reaction is tRNA(Phe) + L-phenylalanine + ATP = L-phenylalanyl-tRNA(Phe) + AMP + diphosphate + H(+). In Nitrosospira multiformis (strain ATCC 25196 / NCIMB 11849 / C 71), this protein is Phenylalanine--tRNA ligase alpha subunit.